We begin with the raw amino-acid sequence, 424 residues long: Probable threonylcarbamoyladenosine tRNA methylthiotransferase (424 aa).

One can recognise an MTTase N-terminal domain in the interval 1–106; that stretch reads MRVAIETYGC…VVDAVYSALN (106 aa). Residues Cys-10, Cys-44, Cys-73, Cys-143, Cys-147, and Cys-150 each coordinate [4Fe-4S] cluster. In terms of domain architecture, Radical SAM core spans 129–359; that stretch reads LRENAIAIVS…TDLMRKIGLE (231 aa). The 59-residue stretch at 362 to 420 folds into the TRAM domain; that stretch reads KRFVGKKLRVLVTKEGKNGRNLARMNSYRAVVTEGAVGEFVEVKIKDCRFNYLIGQLAA.

It belongs to the methylthiotransferase family. CDKAL1 subfamily. [4Fe-4S] cluster serves as cofactor.

It catalyses the reaction N(6)-L-threonylcarbamoyladenosine(37) in tRNA + (sulfur carrier)-SH + AH2 + 2 S-adenosyl-L-methionine = 2-methylsulfanyl-N(6)-L-threonylcarbamoyladenosine(37) in tRNA + (sulfur carrier)-H + 5'-deoxyadenosine + L-methionine + A + S-adenosyl-L-homocysteine + 2 H(+). Functionally, catalyzes the methylthiolation of N6-threonylcarbamoyladenosine (t(6)A), leading to the formation of 2-methylthio-N6-threonylcarbamoyladenosine (ms(2)t(6)A) at position 37 in tRNAs that read codons beginning with adenine. This chain is Probable threonylcarbamoyladenosine tRNA methylthiotransferase, found in Archaeoglobus fulgidus (strain ATCC 49558 / DSM 4304 / JCM 9628 / NBRC 100126 / VC-16).